Reading from the N-terminus, the 173-residue chain is Dual-action ribosomal maturation protein DarP (173 aa).

The protein belongs to the DarP family.

Its subcellular location is the cytoplasm. Its function is as follows. Member of a network of 50S ribosomal subunit biogenesis factors which assembles along the 30S-50S interface, preventing incorrect 23S rRNA structures from forming. Promotes peptidyl transferase center (PTC) maturation. The chain is Dual-action ribosomal maturation protein DarP from Pseudomonas putida (strain ATCC 700007 / DSM 6899 / JCM 31910 / BCRC 17059 / LMG 24140 / F1).